A 243-amino-acid polypeptide reads, in one-letter code: Phosphoribosyl isomerase A (243 aa).

Residue D9 is the Proton acceptor of the active site. Catalysis depends on D128, which acts as the Proton donor.

Belongs to the HisA/HisF family.

Its subcellular location is the cytoplasm. The catalysed reaction is 1-(5-phospho-beta-D-ribosyl)-5-[(5-phospho-beta-D-ribosylamino)methylideneamino]imidazole-4-carboxamide = 5-[(5-phospho-1-deoxy-D-ribulos-1-ylimino)methylamino]-1-(5-phospho-beta-D-ribosyl)imidazole-4-carboxamide. It carries out the reaction N-(5-phospho-beta-D-ribosyl)anthranilate = 1-(2-carboxyphenylamino)-1-deoxy-D-ribulose 5-phosphate. It participates in amino-acid biosynthesis; L-histidine biosynthesis; L-histidine from 5-phospho-alpha-D-ribose 1-diphosphate: step 4/9. Its pathway is amino-acid biosynthesis; L-tryptophan biosynthesis; L-tryptophan from chorismate: step 3/5. Involved in both the histidine and tryptophan biosynthetic pathways. The protein is Phosphoribosyl isomerase A of Mycolicibacterium paratuberculosis (strain ATCC BAA-968 / K-10) (Mycobacterium paratuberculosis).